A 182-amino-acid chain; its full sequence is Crossover junction endodeoxyribonuclease RuvC (182 aa).

Active-site residues include D7, E67, and D139. D7, E67, and D139 together coordinate Mg(2+).

The protein belongs to the RuvC family. Homodimer which binds Holliday junction (HJ) DNA. The HJ becomes 2-fold symmetrical on binding to RuvC with unstacked arms; it has a different conformation from HJ DNA in complex with RuvA. In the full resolvosome a probable DNA-RuvA(4)-RuvB(12)-RuvC(2) complex forms which resolves the HJ. The cofactor is Mg(2+).

The protein resides in the cytoplasm. It catalyses the reaction Endonucleolytic cleavage at a junction such as a reciprocal single-stranded crossover between two homologous DNA duplexes (Holliday junction).. Functionally, the RuvA-RuvB-RuvC complex processes Holliday junction (HJ) DNA during genetic recombination and DNA repair. Endonuclease that resolves HJ intermediates. Cleaves cruciform DNA by making single-stranded nicks across the HJ at symmetrical positions within the homologous arms, yielding a 5'-phosphate and a 3'-hydroxyl group; requires a central core of homology in the junction. The consensus cleavage sequence is 5'-(A/T)TT(C/G)-3'. Cleavage occurs on the 3'-side of the TT dinucleotide at the point of strand exchange. HJ branch migration catalyzed by RuvA-RuvB allows RuvC to scan DNA until it finds its consensus sequence, where it cleaves and resolves the cruciform DNA. This chain is Crossover junction endodeoxyribonuclease RuvC, found in Bordetella parapertussis (strain 12822 / ATCC BAA-587 / NCTC 13253).